Reading from the N-terminus, the 132-residue chain is UPF0299 membrane protein YohJ (132 aa).

Transmembrane regions (helical) follow at residues 8–28 (IWQY…GIFI), 31–51 (LLPV…VLLA), 63–83 (GCYL…VGVM), and 93–113 (FGPV…VVSW).

This sequence belongs to the UPF0299 family.

It localises to the cell inner membrane. This is UPF0299 membrane protein YohJ from Escherichia fergusonii (strain ATCC 35469 / DSM 13698 / CCUG 18766 / IAM 14443 / JCM 21226 / LMG 7866 / NBRC 102419 / NCTC 12128 / CDC 0568-73).